Here is an 81-residue protein sequence, read N- to C-terminus: Sulfur carrier protein TusA (81 aa).

Cysteine 19 (cysteine persulfide intermediate) is an active-site residue.

It belongs to the sulfur carrier protein TusA family. Interacts with IscS.

The protein resides in the cytoplasm. Its pathway is tRNA modification. Its function is as follows. Sulfur carrier protein involved in sulfur trafficking in the cell. Part of a sulfur-relay system required for 2-thiolation during synthesis of 2-thiouridine of the modified wobble base 5-methylaminomethyl-2-thiouridine (mnm(5)s(2)U) in tRNA. Interacts with IscS and stimulates its cysteine desulfurase activity. Accepts an activated sulfur from IscS, which is then transferred to TusD, and thus determines the direction of sulfur flow from IscS to 2-thiouridine formation. Also appears to be involved in sulfur transfer for the biosynthesis of molybdopterin. The protein is Sulfur carrier protein TusA of Escherichia coli (strain SMS-3-5 / SECEC).